The following is a 206-amino-acid chain: Platelet glycoprotein Ib beta chain (206 aa).

The signal sequence occupies residues 1 to 26; the sequence is MGSRPRGALSLLLLLLAPPSRPASGC. Cystine bridges form between C26–C32 and C30–C39. The LRRNT domain maps to 27 to 55; that stretch reads PAPCRCSETRVDCGRRGLTWASLPAAFPP. The Extracellular portion of the chain corresponds to 27–150; the sequence is PAPCRCSETR…CAPGLLCWGA (124 aa). An LRR repeat occupies 60–83; sequence LVLTDNNLTALPPGLLDTLPALRR. An LRRCT domain is found at 89–143; sequence NPWRCDCRLLPLRAWLAGRPEREFYRDLRCVAPLALRGRLLPYVAEDELRAACAP. 2 disulfide bridges follow: C93–C118 and C95–C141. The helical transmembrane segment at 151–171 threads the bilayer; the sequence is LVAQLALLVLGLLHALLLALL. At 172–206 the chain is on the cytoplasmic side; it reads LSRLRRLRAQARARSTREFSLTAPLVAESAGGGAS. S186 carries the phosphoserine modification. At S191 the chain carries Phosphoserine; by PKA. T193 carries the phosphothreonine modification. S200 is subject to Phosphoserine.

In terms of assembly, two GP-Ib beta are disulfide-linked to one GP-Ib alpha. GP-IX is complexed with the GP-Ib heterodimer via a non covalent linkage. Interacts with TRAF4.

The protein resides in the membrane. In terms of biological role, gp-Ib, a surface membrane protein of platelets, participates in the formation of platelet plugs by binding to von Willebrand factor, which is already bound to the subendothelium. In Rattus norvegicus (Rat), this protein is Platelet glycoprotein Ib beta chain (Gp1bb).